A 180-amino-acid polypeptide reads, in one-letter code: Ribulose bisphosphate carboxylase small subunit, chloroplastic 1 (180 aa).

A chloroplast-targeting transit peptide spans 1–56 (MASSVLSSAAVATRSNVAQANMVAPFTGLKSAASFPVSRKQNLDITSIASNGGRVQ).

It belongs to the RuBisCO small chain family. Heterohexadecamer of 8 large and 8 small subunits.

The protein resides in the plastid. It localises to the chloroplast. Functionally, ruBisCO catalyzes two reactions: the carboxylation of D-ribulose 1,5-bisphosphate, the primary event in carbon dioxide fixation, as well as the oxidative fragmentation of the pentose substrate. Both reactions occur simultaneously and in competition at the same active site. Although the small subunit is not catalytic it is essential for maximal activity. The sequence is that of Ribulose bisphosphate carboxylase small subunit, chloroplastic 1 from Nicotiana sylvestris (Wood tobacco).